Consider the following 262-residue polypeptide: Cytochrome c oxidase subunit 3 (262 aa).

A run of 7 helical transmembrane segments spans residues 16–36, 39–59, 83–103, 128–148, 160–180, 198–218, and 241–261; these read PWPY…VVYF, SQTW…IVWW, GMLL…WAFF, FSVP…VTWA, AING…LQAM, FFVA…FLAV, and WYWH…YWWG.

The protein belongs to the cytochrome c oxidase subunit 3 family. As to quaternary structure, component of the cytochrome c oxidase (complex IV, CIV), a multisubunit enzyme composed of a catalytic core of 3 subunits and several supernumerary subunits. The complex exists as a monomer or a dimer and forms supercomplexes (SCs) in the inner mitochondrial membrane with ubiquinol-cytochrome c oxidoreductase (cytochrome b-c1 complex, complex III, CIII).

It localises to the mitochondrion inner membrane. It catalyses the reaction 4 Fe(II)-[cytochrome c] + O2 + 8 H(+)(in) = 4 Fe(III)-[cytochrome c] + 2 H2O + 4 H(+)(out). Functionally, component of the cytochrome c oxidase, the last enzyme in the mitochondrial electron transport chain which drives oxidative phosphorylation. The respiratory chain contains 3 multisubunit complexes succinate dehydrogenase (complex II, CII), ubiquinol-cytochrome c oxidoreductase (cytochrome b-c1 complex, complex III, CIII) and cytochrome c oxidase (complex IV, CIV), that cooperate to transfer electrons derived from NADH and succinate to molecular oxygen, creating an electrochemical gradient over the inner membrane that drives transmembrane transport and the ATP synthase. Cytochrome c oxidase is the component of the respiratory chain that catalyzes the reduction of oxygen to water. Electrons originating from reduced cytochrome c in the intermembrane space (IMS) are transferred via the dinuclear copper A center (CU(A)) of subunit 2 and heme A of subunit 1 to the active site in subunit 1, a binuclear center (BNC) formed by heme A3 and copper B (CU(B)). The BNC reduces molecular oxygen to 2 water molecules using 4 electrons from cytochrome c in the IMS and 4 protons from the mitochondrial matrix. In Metridium senile (Brown sea anemone), this protein is Cytochrome c oxidase subunit 3 (COIII).